Consider the following 327-residue polypeptide: Phosphoenolpyruvate transferase (327 aa).

Asp-59 is a 7,8-didemethyl-8-hydroxy-5-deazariboflavin binding site.

Belongs to the CofD family. As to quaternary structure, homodimer. The cofactor is Mg(2+).

The enzyme catalyses enolpyruvoyl-2-diphospho-5'-guanosine + 7,8-didemethyl-8-hydroxy-5-deazariboflavin = dehydro coenzyme F420-0 + GMP + H(+). Its pathway is cofactor biosynthesis; coenzyme F420 biosynthesis. In terms of biological role, catalyzes the transfer of the phosphoenolpyruvate moiety from enoylpyruvoyl-2-diphospho-5'-guanosine (EPPG) to 7,8-didemethyl-8-hydroxy-5-deazariboflavin (FO) with the formation of dehydro coenzyme F420-0 and GMP. This is Phosphoenolpyruvate transferase from Mycolicibacterium smegmatis (strain ATCC 700084 / mc(2)155) (Mycobacterium smegmatis).